A 399-amino-acid chain; its full sequence is Telomeric repeat-binding factor 2-interacting protein 1 (399 aa).

Positions 1–21 are disordered; sequence MAEAMELGKDPNGPTHSSTLF. The residue at position 2 (A2) is an N-acetylalanine. The 92-residue stretch at 10 to 101 folds into the BRCT domain; it reads DPNGPTHSST…EKLELEAYRL (92 aa). S36 and S43 each carry phosphoserine. K114 is covalently cross-linked (Glycyl lysine isopeptide (Lys-Gly) (interchain with G-Cter in SUMO2)). The 61-residue stretch at 130 to 190 folds into the Myb-like domain; sequence QSQAGRMVFT…SMKDRYLKRL (61 aa). Phosphoserine occurs at positions 156 and 158. K196 participates in a covalent cross-link: Glycyl lysine isopeptide (Lys-Gly) (interchain with G-Cter in SUMO2). Disordered stretches follow at residues 199–245 and 279–309; these read LGEA…KEEI and TMCD…VSAP. S205 and S208 each carry phosphoserine. Residues K210, K214, and K242 each participate in a glycyl lysine isopeptide (Lys-Gly) (interchain with G-Cter in SUMO2) cross-link. The segment covering 281 to 304 has biased composition (acidic residues); the sequence is CDDDPCTPEEDSETQPDEEEEEEE. K372 is covalently cross-linked (Glycyl lysine isopeptide (Lys-Gly) (interchain with G-Cter in SUMO2)). The Nuclear localization signal motif lies at 383–399; that stretch reads KKFGAQNVARRIEFRKK.

It belongs to the RAP1 family. In terms of assembly, associates with the I-kappa-B-kinase (IKK) core complex, composed of CHUK, IKBKB and IKBKG. Homodimer. Component of the shelterin complex (telosome) composed of TERF1, TERF2, TINF2, TERF2IP ACD and POT1. Interacts with TERF2 (but not TERF1) with its C-terminus. Interacts with SLX4/BTBD12. Interacts with TERF2; the interaction is direct.

Its subcellular location is the nucleus. It localises to the cytoplasm. The protein resides in the chromosome. The protein localises to the telomere. Its function is as follows. Acts both as a regulator of telomere function and as a transcription regulator. Involved in the regulation of telomere length and protection as a component of the shelterin complex (telosome). In contrast to other components of the shelterin complex, it is dispensible for telomere capping and does not participate in the protection of telomeres against non-homologous end-joining (NHEJ)-mediated repair. Instead, it is required to negatively regulate telomere recombination and is essential for repressing homology-directed repair (HDR), which can affect telomere length. Does not bind DNA directly: recruited to telomeric double-stranded 5'-TTAGGG-3' repeats via its interaction with TERF2. Independently of its function in telomeres, also acts as a transcription regulator: recruited to extratelomeric 5'-TTAGGG-3' sites via its association with TERF2 or other factors, and regulates gene expression. When cytoplasmic, associates with the I-kappa-B-kinase (IKK) complex and acts as a regulator of the NF-kappa-B signaling by promoting IKK-mediated phosphorylation of RELA/p65, leading to activate expression of NF-kappa-B target genes. The protein is Telomeric repeat-binding factor 2-interacting protein 1 (TERF2IP) of Bos taurus (Bovine).